Reading from the N-terminus, the 321-residue chain is Manganese-dependent ADP-ribose/CDP-alcohol diphosphatase (321 aa).

Positions 25, 27, 72, 107, 226, 263, and 265 each coordinate Zn(2+).

This sequence belongs to the ADPRibase-Mn family. Monomer. It depends on Mg(2+) as a cofactor.

The enzyme catalyses CDP-choline + H2O = phosphocholine + CMP + 2 H(+). It carries out the reaction ADP-D-ribose + H2O = D-ribose 5-phosphate + AMP + 2 H(+). The catalysed reaction is CDP-glycerol + H2O = sn-glycerol 3-phosphate + CMP + 2 H(+). Functionally, hydrolyzes ADP-ribose, IDP-ribose, CDP-glycerol, CDP-choline and CDP-ethanolamine, but not other non-reducing ADP-sugars or CDP-glucose. The polypeptide is Manganese-dependent ADP-ribose/CDP-alcohol diphosphatase (Oryza sativa subsp. japonica (Rice)).